The primary structure comprises 262 residues: Putative glutamine--fructose-6-phosphate aminotransferase [isomerizing] (262 aa).

Cysteine 2 (nucleophile; for GATase activity) is an active-site residue. The region spanning 2–262 (CGIFGYCNFL…RKSPPFVHNT (261 aa)) is the Glutamine amidotransferase type-2 domain.

It catalyses the reaction D-fructose 6-phosphate + L-glutamine = D-glucosamine 6-phosphate + L-glutamate. It participates in nucleotide-sugar biosynthesis; UDP-N-acetyl-alpha-D-glucosamine biosynthesis; alpha-D-glucosamine 6-phosphate from D-fructose 6-phosphate: step 1/1. Its function is as follows. Involved in amino sugar synthesis (formation of chitin, supplies the amino sugars of asparagine-linked oligosaccharides of glycoproteins). In Saccharomyces cerevisiae (strain ATCC 204508 / S288c) (Baker's yeast), this protein is Putative glutamine--fructose-6-phosphate aminotransferase [isomerizing].